The primary structure comprises 426 residues: Lactate racemase (426 aa).

Residue 72–75 (DHTR) coordinates Ni(II)-pyridinium-3,5-bisthiocarboxylate mononucleotide. Catalysis depends on proton donor/acceptor residues histidine 108 and histidine 174. Ni(II)-pyridinium-3,5-bisthiocarboxylate mononucleotide-binding residues include lysine 184 and histidine 200. 2 residues coordinate substrate: glutamine 295 and lysine 298.

It belongs to the lactate racemase family. As to quaternary structure, homodimer. Ni(II)-pyridinium-3,5-bisthiocarboxylate mononucleotide serves as cofactor.

It catalyses the reaction (S)-lactate = (R)-lactate. Activation of the apo-enzyme requires the three accessory proteins LarB, LarE and LarC, that are involved in the biosynthesis of the nickel-pincer cofactor of LarA. Functionally, catalyzes the interconversion between the D- and L-isomers of lactate. The chain is Lactate racemase from Thermoanaerobacterium thermosaccharolyticum (strain ATCC 7956 / DSM 571 / NCIMB 9385 / NCA 3814 / NCTC 13789 / WDCM 00135 / 2032) (Clostridium thermosaccharolyticum).